The sequence spans 73 residues: Gas vesicle protein A (73 aa).

Belongs to the gas vesicle GvpA family. As to quaternary structure, the gas vesicle shell is 2 nm thick and consists of a single layer of this protein. It forms helical ribs nearly perpendicular to the long axis of the vesicle.

Its subcellular location is the gas vesicle shell. Functionally, gas vesicles are hollow, gas filled proteinaceous nanostructures found in some microorganisms. During planktonic growth they allow positioning of the organism at a favorable depth for light or nutrient acquisition. GvpA forms the protein shell. This chain is Gas vesicle protein A, found in Nostoc punctiforme (strain ATCC 29133 / PCC 73102).